We begin with the raw amino-acid sequence, 178 residues long: Gluconokinase (178 aa).

19–26 (GVSGTGKT) provides a ligand contact to ATP.

It belongs to the gluconokinase GntK/GntV family. Monomer.

It catalyses the reaction D-gluconate + ATP = 6-phospho-D-gluconate + ADP + H(+). It functions in the pathway carbohydrate acid metabolism; D-gluconate degradation. Activated by magnesium. In terms of biological role, phosphorylates gluconate to 6-phosphogluconate. The chain is Gluconokinase from Gluconobacter oxydans (strain 621H) (Gluconobacter suboxydans).